The chain runs to 490 residues: Bifunctional protein HldE (490 aa).

A ribokinase region spans residues 1 to 330 (MFSFDALLQA…RRILPHASLA (330 aa)). 205–208 (NRKE) serves as a coordination point for ATP. Aspartate 275 is a catalytic residue. The cytidylyltransferase stretch occupies residues 358 to 490 (FTNGCFDILH…LVARAREGQS (133 aa)).

The protein in the N-terminal section; belongs to the carbohydrate kinase PfkB family. It in the C-terminal section; belongs to the cytidylyltransferase family. Homodimer.

It catalyses the reaction D-glycero-beta-D-manno-heptose 7-phosphate + ATP = D-glycero-beta-D-manno-heptose 1,7-bisphosphate + ADP + H(+). The catalysed reaction is D-glycero-beta-D-manno-heptose 1-phosphate + ATP + H(+) = ADP-D-glycero-beta-D-manno-heptose + diphosphate. The protein operates within nucleotide-sugar biosynthesis; ADP-L-glycero-beta-D-manno-heptose biosynthesis; ADP-L-glycero-beta-D-manno-heptose from D-glycero-beta-D-manno-heptose 7-phosphate: step 1/4. It functions in the pathway nucleotide-sugar biosynthesis; ADP-L-glycero-beta-D-manno-heptose biosynthesis; ADP-L-glycero-beta-D-manno-heptose from D-glycero-beta-D-manno-heptose 7-phosphate: step 3/4. Functionally, catalyzes the phosphorylation of D-glycero-D-manno-heptose 7-phosphate at the C-1 position to selectively form D-glycero-beta-D-manno-heptose-1,7-bisphosphate. Its function is as follows. Catalyzes the ADP transfer from ATP to D-glycero-beta-D-manno-heptose 1-phosphate, yielding ADP-D-glycero-beta-D-manno-heptose. This is Bifunctional protein HldE from Rhodopseudomonas palustris (strain ATCC BAA-98 / CGA009).